The primary structure comprises 131 residues: MSWQAYVDEHLMCEIEGHHLASAAILGHDGTVWAQSADFPQFKPEEITGIMKDFDEPGHLAPTGMFVAAAKYMVIQGEPGVVIRGKKGAGGITIKKTGQALVVGIYDEPMTPGQCDMVVGRLGDYLLEQGL.

A disulfide bridge links Cys-13 with Cys-115. Positions 81–97 (VVIRGKKGAGGITIKKT) match the Involved in PIP2 interaction motif. Thr-111 is modified (phosphothreonine).

The protein belongs to the profilin family. As to quaternary structure, occurs in many kinds of cells as a complex with monomeric actin in a 1:1 ratio. In terms of processing, phosphorylated by MAP kinases.

The protein localises to the cytoplasm. It localises to the cytoskeleton. Functionally, binds to actin and affects the structure of the cytoskeleton. At high concentrations, profilin prevents the polymerization of actin, whereas it enhances it at low concentrations. The sequence is that of Profilin-6 from Corylus avellana (European hazel).